Consider the following 298-residue polypeptide: Pantothenate synthetase (298 aa).

30–37 (MGNLHEGH) contributes to the ATP binding site. Catalysis depends on His-37, which acts as the Proton donor. Position 61 (Gln-61) interacts with (R)-pantoate. Gln-61 provides a ligand contact to beta-alanine. 149 to 152 (GEKD) lines the ATP pocket. Gln-155 is a binding site for (R)-pantoate. Residues Val-178 and 186-189 (MSSR) contribute to the ATP site.

Belongs to the pantothenate synthetase family. As to quaternary structure, homodimer.

Its subcellular location is the cytoplasm. The catalysed reaction is (R)-pantoate + beta-alanine + ATP = (R)-pantothenate + AMP + diphosphate + H(+). The protein operates within cofactor biosynthesis; (R)-pantothenate biosynthesis; (R)-pantothenate from (R)-pantoate and beta-alanine: step 1/1. Functionally, catalyzes the condensation of pantoate with beta-alanine in an ATP-dependent reaction via a pantoyl-adenylate intermediate. The chain is Pantothenate synthetase from Aliivibrio salmonicida (strain LFI1238) (Vibrio salmonicida (strain LFI1238)).